Consider the following 276-residue polypeptide: Glucosamine-6-phosphate deaminase 2 (276 aa).

Asp-72 functions as the Proton acceptor; for enolization step in the catalytic mechanism. Positions 105–130 (HILDGNAADLQAECDAFENKIKEAGG) form a coiled coil. The For ring-opening step role is filled by Asp-141. The active-site Proton acceptor; for ring-opening step is His-143. Glu-148 serves as the catalytic For ring-opening step. Thr-161 is subject to Phosphothreonine.

Belongs to the glucosamine/galactosamine-6-phosphate isomerase family. Homohexamer. As to expression, ubiquitous, with highest expression detected in testis, ovary, placenta, and heart.

It localises to the cytoplasm. The catalysed reaction is alpha-D-glucosamine 6-phosphate + H2O = beta-D-fructose 6-phosphate + NH4(+). It functions in the pathway nucleotide-sugar biosynthesis; UDP-N-acetyl-alpha-D-glucosamine biosynthesis; alpha-D-glucosamine 6-phosphate from D-fructose 6-phosphate: step 1/1. With respect to regulation, allosterically activated by N-acetylglucosamine-6-phosphate (GlcNAc6P). Its function is as follows. Catalyzes the reversible conversion of alpha-D-glucosamine 6-phosphate (GlcN-6P) into beta-D-fructose 6-phosphate (Fru-6P) and ammonium ion, a regulatory reaction step in de novo uridine diphosphate-N-acetyl-alpha-D-glucosamine (UDP-GlcNAc) biosynthesis via hexosamine pathway. Deamination is coupled to aldo-keto isomerization mediating the metabolic flux from UDP-GlcNAc toward Fru-6P. At high ammonium level can drive amination and isomerization of Fru-6P toward hexosamines and UDP-GlcNAc synthesis. Has a role in fine tuning the metabolic fluctuations of cytosolic UDP-GlcNAc and their effects on hyaluronan synthesis that occur during tissue remodeling. This Homo sapiens (Human) protein is Glucosamine-6-phosphate deaminase 2.